The chain runs to 407 residues: Phosphopentomutase (407 aa).

Asp11, Asp305, His310, Asp346, His347, and His358 together coordinate Mn(2+).

The protein belongs to the phosphopentomutase family. Requires Mn(2+) as cofactor.

The protein resides in the cytoplasm. It catalyses the reaction 2-deoxy-alpha-D-ribose 1-phosphate = 2-deoxy-D-ribose 5-phosphate. The catalysed reaction is alpha-D-ribose 1-phosphate = D-ribose 5-phosphate. Its pathway is carbohydrate degradation; 2-deoxy-D-ribose 1-phosphate degradation; D-glyceraldehyde 3-phosphate and acetaldehyde from 2-deoxy-alpha-D-ribose 1-phosphate: step 1/2. In terms of biological role, isomerase that catalyzes the conversion of deoxy-ribose 1-phosphate (dRib-1-P) and ribose 1-phosphate (Rib-1-P) to deoxy-ribose 5-phosphate (dRib-5-P) and ribose 5-phosphate (Rib-5-P), respectively. This chain is Phosphopentomutase, found in Legionella pneumophila (strain Lens).